Consider the following 324-residue polypeptide: Acetyl-coenzyme A carboxylase carboxyl transferase subunit alpha (324 aa).

The CoA carboxyltransferase C-terminal domain maps to 37 to 291 (ILEDKLENLE…DLMLRKTFEQ (255 aa)).

The protein belongs to the AccA family. As to quaternary structure, acetyl-CoA carboxylase is a heterohexamer composed of biotin carboxyl carrier protein (AccB), biotin carboxylase (AccC) and two subunits each of ACCase subunit alpha (AccA) and ACCase subunit beta (AccD).

Its subcellular location is the cytoplasm. It carries out the reaction N(6)-carboxybiotinyl-L-lysyl-[protein] + acetyl-CoA = N(6)-biotinyl-L-lysyl-[protein] + malonyl-CoA. The protein operates within lipid metabolism; malonyl-CoA biosynthesis; malonyl-CoA from acetyl-CoA: step 1/1. Component of the acetyl coenzyme A carboxylase (ACC) complex. First, biotin carboxylase catalyzes the carboxylation of biotin on its carrier protein (BCCP) and then the CO(2) group is transferred by the carboxyltransferase to acetyl-CoA to form malonyl-CoA. The sequence is that of Acetyl-coenzyme A carboxylase carboxyl transferase subunit alpha from Bacillus cereus (strain Q1).